Consider the following 333-residue polypeptide: Biotin synthase (333 aa).

One can recognise a Radical SAM core domain in the interval 47–276; it reads ADIQRASLLS…KARVRLSAGR (230 aa). [4Fe-4S] cluster-binding residues include cysteine 62, cysteine 66, and cysteine 69. [2Fe-2S] cluster contacts are provided by cysteine 107, cysteine 139, cysteine 199, and arginine 271.

This sequence belongs to the radical SAM superfamily. Biotin synthase family. In terms of assembly, homodimer. The cofactor is [4Fe-4S] cluster. It depends on [2Fe-2S] cluster as a cofactor.

It carries out the reaction (4R,5S)-dethiobiotin + (sulfur carrier)-SH + 2 reduced [2Fe-2S]-[ferredoxin] + 2 S-adenosyl-L-methionine = (sulfur carrier)-H + biotin + 2 5'-deoxyadenosine + 2 L-methionine + 2 oxidized [2Fe-2S]-[ferredoxin]. Its pathway is cofactor biosynthesis; biotin biosynthesis; biotin from 7,8-diaminononanoate: step 2/2. Catalyzes the conversion of dethiobiotin (DTB) to biotin by the insertion of a sulfur atom into dethiobiotin via a radical-based mechanism. In Methylobacterium nodulans (strain LMG 21967 / CNCM I-2342 / ORS 2060), this protein is Biotin synthase.